The sequence spans 232 residues: Lipoprotein-releasing system ATP-binding protein LolD 1 (232 aa).

The region spanning 11 to 231 (VYLHDVKRQY…SIQDGLVVEL (221 aa)) is the ABC transporter domain. 47-54 (APSGAGKS) is an ATP binding site.

Belongs to the ABC transporter superfamily. Lipoprotein translocase (TC 3.A.1.125) family. In terms of assembly, the complex is composed of two ATP-binding proteins (LolD) and two transmembrane proteins (LolC and LolE).

It localises to the cell inner membrane. In terms of biological role, part of the ABC transporter complex LolCDE involved in the translocation of mature outer membrane-directed lipoproteins, from the inner membrane to the periplasmic chaperone, LolA. Responsible for the formation of the LolA-lipoprotein complex in an ATP-dependent manner. The protein is Lipoprotein-releasing system ATP-binding protein LolD 1 of Rhodopseudomonas palustris (strain BisB18).